The following is a 72-amino-acid chain: UPF0154 protein RBAM_017710 (72 aa).

The helical transmembrane segment at 4–24 (WVGILVGVVALLIGVALGFFI) threads the bilayer.

Belongs to the UPF0154 family.

The protein localises to the cell membrane. The sequence is that of UPF0154 protein RBAM_017710 from Bacillus velezensis (strain DSM 23117 / BGSC 10A6 / LMG 26770 / FZB42) (Bacillus amyloliquefaciens subsp. plantarum).